A 392-amino-acid chain; its full sequence is Acetyl-CoA acetyltransferase (392 aa).

Catalysis depends on C87, which acts as the Acyl-thioester intermediate. Catalysis depends on proton acceptor residues H348 and C378.

This sequence belongs to the thiolase-like superfamily. Thiolase family.

Its subcellular location is the cytoplasm. The enzyme catalyses 2 acetyl-CoA = acetoacetyl-CoA + CoA. The protein operates within metabolic intermediate biosynthesis; (R)-mevalonate biosynthesis; (R)-mevalonate from acetyl-CoA: step 1/3. In terms of biological role, involved in the production of polyhydroxyalkonic acids (PHAs), composed primarily of 3-hydroxybutyric acid (3HB) and 3-hydroxyvaleric acid (3HV). In Chromobacterium violaceum (strain ATCC 12472 / DSM 30191 / JCM 1249 / CCUG 213 / NBRC 12614 / NCIMB 9131 / NCTC 9757 / MK), this protein is Acetyl-CoA acetyltransferase (phaA).